The chain runs to 578 residues: Glutathione hydrolase 2 (578 aa).

A signal peptide spans 1–26 (MNSFMSLVRTATIALLLIAFLQNANA). N-linked (GlcNAc...) asparagine glycosylation is present at Asn-94. Arg-103 serves as a coordination point for L-glutamate. N-linked (GlcNAc...) asparagine glycosylation is found at Asn-176 and Asn-227. Thr-374 functions as the Nucleophile in the catalytic mechanism. Residues Thr-392, Asn-394, Glu-413, Asp-416, 446–447 (SS), and 467–468 (GG) contribute to the L-glutamate site. Asn-511 is a glycosylation site (N-linked (GlcNAc...) asparagine).

The protein belongs to the gamma-glutamyltransferase family. In terms of tissue distribution, expressed in roots, immature trichomes and pollen. In developing siliques, specifically expressed in the embryo, endosperm, outer integument and a small portion of the funiculus.

The protein resides in the secreted. It localises to the extracellular space. Its subcellular location is the apoplast. It carries out the reaction an N-terminal (5-L-glutamyl)-[peptide] + an alpha-amino acid = 5-L-glutamyl amino acid + an N-terminal L-alpha-aminoacyl-[peptide]. The enzyme catalyses glutathione + H2O = L-cysteinylglycine + L-glutamate. It catalyses the reaction an S-substituted glutathione + H2O = an S-substituted L-cysteinylglycine + L-glutamate. The protein operates within sulfur metabolism; glutathione metabolism. Its function is as follows. May be required for glutathione transport into developing seeds. This Arabidopsis thaliana (Mouse-ear cress) protein is Glutathione hydrolase 2 (GGT2).